The chain runs to 63 residues: DNA-directed RNA polymerase subunit omega (63 aa).

The protein belongs to the RNA polymerase subunit omega family. In terms of assembly, the RNAP catalytic core consists of 2 alpha, 1 beta, 1 beta' and 1 omega subunit. When a sigma factor is associated with the core the holoenzyme is formed, which can initiate transcription.

It carries out the reaction RNA(n) + a ribonucleoside 5'-triphosphate = RNA(n+1) + diphosphate. In terms of biological role, promotes RNA polymerase assembly. Latches the N- and C-terminal regions of the beta' subunit thereby facilitating its interaction with the beta and alpha subunits. The protein is DNA-directed RNA polymerase subunit omega of Blochmanniella pennsylvanica (strain BPEN).